Consider the following 219-residue polypeptide: Large ribosomal subunit protein bL25 (219 aa).

The segment at 176–219 (VTVVPPTDEPSEEEVEAMEGESATEEPEVVGEDKEDDEEENKED) is disordered. Positions 184–219 (EPSEEEVEAMEGESATEEPEVVGEDKEDDEEENKED) are enriched in acidic residues.

This sequence belongs to the bacterial ribosomal protein bL25 family. CTC subfamily. Part of the 50S ribosomal subunit; part of the 5S rRNA/L5/L18/L25 subcomplex. Contacts the 5S rRNA. Binds to the 5S rRNA independently of L5 and L18.

Its function is as follows. This is one of the proteins that binds to the 5S RNA in the ribosome where it forms part of the central protuberance. This Staphylococcus epidermidis (strain ATCC 35984 / DSM 28319 / BCRC 17069 / CCUG 31568 / BM 3577 / RP62A) protein is Large ribosomal subunit protein bL25.